A 1826-amino-acid chain; its full sequence is Protein TIC 214 (1826 aa).

The next 5 membrane-spanning stretches (helical) occupy residues 18 to 38 (IINSVVVVGLYYGFLTTFSIG), 67 to 87 (FITGQLMMFISIYYAPLHLAL), 127 to 147 (LSIQCVFLNNLIFQLFNHFIL), 175 to 195 (VGWLIGHILFMKWVGLVLVWI), and 221 to 241 (IFSILLFITCVYYLGRIPSPI). A disordered region spans residues 250–308 (TEEGWESEEETDVEIETASETKGTKQEQEGSTEEDPSPSLFSEEKEDPDKIDETEEIRV). 2 stretches are compositionally biased toward acidic residues: residues 252-266 (EGWESEEETDVEIET) and 293-304 (EKEDPDKIDETE). The chain crosses the membrane as a helical span at residues 774–794 (LILIIQSIFRKYILLPSLIIV). The tract at residues 1032 to 1057 (TKGLMKEKNSNAKKRGSPNKTSFNRK) is disordered. Over residues 1042 to 1057 (NAKKRGSPNKTSFNRK) the composition is skewed to basic residues. The chain crosses the membrane as a helical span at residues 1081–1101 (FYLFITIFIKRIYIDIFVCII).

It belongs to the TIC214 family. As to quaternary structure, part of the Tic complex.

Its subcellular location is the plastid. The protein localises to the chloroplast inner membrane. Functionally, involved in protein precursor import into chloroplasts. May be part of an intermediate translocation complex acting as a protein-conducting channel at the inner envelope. The protein is Protein TIC 214 of Daucus carota (Wild carrot).